The following is a 417-amino-acid chain: NADH-quinone oxidoreductase subunit D (417 aa).

It belongs to the complex I 49 kDa subunit family. As to quaternary structure, NDH-1 is composed of 14 different subunits. Subunits NuoB, C, D, E, F, and G constitute the peripheral sector of the complex.

Its subcellular location is the cell inner membrane. It carries out the reaction a quinone + NADH + 5 H(+)(in) = a quinol + NAD(+) + 4 H(+)(out). In terms of biological role, NDH-1 shuttles electrons from NADH, via FMN and iron-sulfur (Fe-S) centers, to quinones in the respiratory chain. The immediate electron acceptor for the enzyme in this species is believed to be ubiquinone. Couples the redox reaction to proton translocation (for every two electrons transferred, four hydrogen ions are translocated across the cytoplasmic membrane), and thus conserves the redox energy in a proton gradient. This Hydrogenovibrio crunogenus (strain DSM 25203 / XCL-2) (Thiomicrospira crunogena) protein is NADH-quinone oxidoreductase subunit D.